The primary structure comprises 614 residues: uncharacterized protein (614 aa).

The tract at residues 23–68 is disordered; the sequence is YPIPSHNGDGESEKNSSDSTSSKVNAKVTSSLQGAPSTNDENSVSP. Positions 49-68 are enriched in polar residues; the sequence is KVTSSLQGAPSTNDENSVSP.

The protein to C.trachomatis CT875.

This is an uncharacterized protein from Chlamydia muridarum (strain MoPn / Nigg).